The chain runs to 347 residues: NADH-ubiquinone oxidoreductase chain 2 (347 aa).

10 helical membrane-spanning segments follow: residues 1 to 21 (MNPL…LIVM), 25 to 45 (HWFM…PLLT), 67 to 87 (SMLL…WSIM), 111 to 131 (FHFW…LILL), 144 to 164 (MIMP…SIAI), 178 to 198 (IMAY…AYNP), 201 to 221 (TLLN…LLMI), 237 to 257 (LPLI…LPPL), 274 to 294 (SSII…YFYT), and 326 to 346 (LPLM…MPIL).

This sequence belongs to the complex I subunit 2 family. Core subunit of respiratory chain NADH dehydrogenase (Complex I) which is composed of 45 different subunits. Interacts with TMEM242.

It is found in the mitochondrion inner membrane. It catalyses the reaction a ubiquinone + NADH + 5 H(+)(in) = a ubiquinol + NAD(+) + 4 H(+)(out). In terms of biological role, core subunit of the mitochondrial membrane respiratory chain NADH dehydrogenase (Complex I) which catalyzes electron transfer from NADH through the respiratory chain, using ubiquinone as an electron acceptor. Essential for the catalytic activity and assembly of complex I. The protein is NADH-ubiquinone oxidoreductase chain 2 of Myotis simus (Velvety myotis).